A 173-amino-acid polypeptide reads, in one-letter code: Dirigent protein 8 (173 aa).

The signal sequence occupies residues 1–22; it reads MTNLILIFAAQILLFYAVASVG. 3 N-linked (GlcNAc...) asparagine glycosylation sites follow: N69, N90, and N125.

The protein belongs to the plant dirigent protein family. In terms of assembly, homodimer.

The protein localises to the secreted. The protein resides in the extracellular space. It localises to the apoplast. In terms of biological role, dirigent proteins impart stereoselectivity on the phenoxy radical-coupling reaction, yielding optically active lignans from two molecules of coniferyl alcohol in the biosynthesis of lignans, flavonolignans, and alkaloids and thus plays a central role in plant secondary metabolism. In Arabidopsis thaliana (Mouse-ear cress), this protein is Dirigent protein 8 (DIR8).